The primary structure comprises 370 residues: Putative replication factor C small subunit L478 (370 aa).

41–48 (GPSGSGKK) provides a ligand contact to ATP. Basic and acidic residues predominate over residues 342-353 (RNKEPEKSEKTK). A disordered region spans residues 342–370 (RNKEPEKSEKTKSKTGKLSRTNSKKTIKN). The segment covering 354 to 370 (SKTGKLSRTNSKKTIKN) has biased composition (basic residues).

The protein belongs to the activator 1 small subunits family. RfcS subfamily.

Part of the RFC clamp loader complex which loads the PCNA sliding clamp onto DNA. This chain is Putative replication factor C small subunit L478, found in Acanthamoeba polyphaga (Amoeba).